The primary structure comprises 333 residues: Ribosomal protein L11 methyltransferase (333 aa).

Residues Thr181, Gly202, Asp224, and Asn268 each contribute to the S-adenosyl-L-methionine site.

It belongs to the methyltransferase superfamily. PrmA family.

Its subcellular location is the cytoplasm. The catalysed reaction is L-lysyl-[protein] + 3 S-adenosyl-L-methionine = N(6),N(6),N(6)-trimethyl-L-lysyl-[protein] + 3 S-adenosyl-L-homocysteine + 3 H(+). In terms of biological role, methylates ribosomal protein L11. This is Ribosomal protein L11 methyltransferase from Helicobacter pylori (strain ATCC 700392 / 26695) (Campylobacter pylori).